The sequence spans 380 residues: Variant-surface-glycoprotein phospholipase C (380 aa).

Positions 31–205 (ITQVCFVGSH…SRRRIFLVVG (175 aa)) constitute a PI-PLC X-box domain.

As to quaternary structure, monomer.

It localises to the membrane. It carries out the reaction a 6-(alpha-D-glucosaminyl)-1-(1,2-diacyl-sn-glycero-3-phospho)-1D-myo-inositol = 6-(alpha-D-glucosaminyl)-1D-myo-inositol 1,2-cyclic phosphate + a 1,2-diacyl-sn-glycerol. Functionally, by hydrolysis of the attached glycolipid, releases soluble variant surface glycoprotein containing phosphoinositol from the cell wall of T.brucei after cell lysis. It also cleaves similar membrane anchors on some mammalian proteins. VSG lipase may play a role in processes such as parasite differentiation or antigenic variation. This chain is Variant-surface-glycoprotein phospholipase C, found in Trypanosoma cruzi.